Here is a 332-residue protein sequence, read N- to C-terminus: MENLEQLVQDGLNAVEKADNLQALDQIRVEYLGKKGVITQQAKTLGKLSAEERPAAGQKINEAKGQVEQAINARRADLEKAAIEARLAAESIDVTLPGRGQDLGGLHPVTRTLQRIEEIFARAGYSVEQGPEIEDDYHNFEALNIPGHHPARAMHDTFYFNPGTLLRTHTSPVQIRTMEAGKPPFRMICPGRVYRCDSDMTHTPMFHQVEGLLVEKNVSFADLKSTVEEFLRVFFERDLKVRFRPSYFPFTEPSAEVDIEWGREPDGSIKWLEVMGCGMVHPKVFEYCGIDSEEYRGFAFGLGVERLAMLRYGVKDLRMFFENDLRFLRQFR.

Glu-252 is a binding site for Mg(2+).

It belongs to the class-II aminoacyl-tRNA synthetase family. Phe-tRNA synthetase alpha subunit type 1 subfamily. As to quaternary structure, tetramer of two alpha and two beta subunits. Requires Mg(2+) as cofactor.

Its subcellular location is the cytoplasm. It catalyses the reaction tRNA(Phe) + L-phenylalanine + ATP = L-phenylalanyl-tRNA(Phe) + AMP + diphosphate + H(+). This is Phenylalanine--tRNA ligase alpha subunit from Marinobacter nauticus (strain ATCC 700491 / DSM 11845 / VT8) (Marinobacter aquaeolei).